Reading from the N-terminus, the 211-residue chain is MTRVVLGSASSGRLSVLRNAGIEPLVVVSDVDEDAIIAAHPSAPPDQVVTALASAKAGEVVTRLSHSDAADAVVIGCDSMLLLDGKLCGKPGSVDAAHRQWQTMSGRSADLVTGHCVIRLHDGEIVGNVTESSGTTVHFGTPSPDDLSAYLATGEPLWVAGAFTLDGLGGWFIDRIEGDPSNVIGVSLPVLRALFERLEVSVADLWSANGR.

Asp78 acts as the Proton acceptor in catalysis.

Belongs to the Maf family. A divalent metal cation is required as a cofactor.

The protein localises to the cytoplasm. The enzyme catalyses a ribonucleoside 5'-triphosphate + H2O = a ribonucleoside 5'-phosphate + diphosphate + H(+). It catalyses the reaction a 2'-deoxyribonucleoside 5'-triphosphate + H2O = a 2'-deoxyribonucleoside 5'-phosphate + diphosphate + H(+). Nucleoside triphosphate pyrophosphatase. May have a dual role in cell division arrest and in preventing the incorporation of modified nucleotides into cellular nucleic acids. In Mycolicibacterium smegmatis (strain ATCC 700084 / mc(2)155) (Mycobacterium smegmatis), this protein is Nucleoside triphosphate pyrophosphatase.